The chain runs to 197 residues: Nucleoid occlusion factor SlmA (197 aa).

In terms of domain architecture, HTH tetR-type spans 7–67; that stretch reads INRREHILQC…GLIEFIEESL (61 aa). A DNA-binding region (H-T-H motif) is located at residues 30–49; the sequence is TTAKLAAEVGVSEAALYRHF. The stretch at 109 to 136 forms a coiled coil; the sequence is DALLGENERLRSRISQLFAKIETHLKQI.

The protein belongs to the nucleoid occlusion factor SlmA family. As to quaternary structure, homodimer. Interacts with FtsZ.

Its subcellular location is the cytoplasm. It localises to the nucleoid. Functionally, required for nucleoid occlusion (NO) phenomenon, which prevents Z-ring formation and cell division over the nucleoid. Acts as a DNA-associated cell division inhibitor that binds simultaneously chromosomal DNA and FtsZ, and disrupts the assembly of FtsZ polymers. SlmA-DNA-binding sequences (SBS) are dispersed on non-Ter regions of the chromosome, preventing FtsZ polymerization at these regions. This chain is Nucleoid occlusion factor SlmA, found in Shewanella halifaxensis (strain HAW-EB4).